We begin with the raw amino-acid sequence, 175 residues long: Di-N-acetylchitobiase (175 aa).

The signal sequence occupies residues Met1–Arg38. In terms of domain architecture, GH18 spans Ala39–Gln175. Residue Asn115 is glycosylated (N-linked (GlcNAc...) asparagine). Catalysis depends on Glu143, which acts as the Proton donor.

The protein belongs to the glycosyl hydrolase 18 family.

The protein resides in the lysosome. Its function is as follows. Involved in the degradation of asparagine-linked glycoproteins. Hydrolyze of N-acetyl-beta-D-glucosamine (1-4)N-acetylglucosamine chitobiose core from the reducing end of the bond, it requires prior cleavage by glycosylasparaginase. The polypeptide is Di-N-acetylchitobiase (CTBS) (Bos taurus (Bovine)).